The primary structure comprises 273 residues: Outer capsid protein VP7 (273 aa).

It belongs to the aquareoviridae outer capsid VP7 protein family. Interacts with VP4 and VP6.

It is found in the virion. Functionally, interacts with VP4 to form the outer icosahedral capsid with an incomplete T=13 symmetry, about 80 nm in diameter, and consisting of 200 VP4-VP7 trimers. This chain is Outer capsid protein VP7 (S10), found in Ctenopharyngodon idella (Grass carp).